The following is a 364-amino-acid chain: UDP-N-acetylglucosamine--N-acetylmuramyl-(pentapeptide) pyrophosphoryl-undecaprenol N-acetylglucosamine transferase (364 aa).

UDP-N-acetyl-alpha-D-glucosamine is bound by residues 10-12 (TGG), Asn-128, Arg-170, Ser-199, Ile-250, and Gln-295.

This sequence belongs to the glycosyltransferase 28 family. MurG subfamily.

It localises to the cell inner membrane. The enzyme catalyses di-trans,octa-cis-undecaprenyl diphospho-N-acetyl-alpha-D-muramoyl-L-alanyl-D-glutamyl-meso-2,6-diaminopimeloyl-D-alanyl-D-alanine + UDP-N-acetyl-alpha-D-glucosamine = di-trans,octa-cis-undecaprenyl diphospho-[N-acetyl-alpha-D-glucosaminyl-(1-&gt;4)]-N-acetyl-alpha-D-muramoyl-L-alanyl-D-glutamyl-meso-2,6-diaminopimeloyl-D-alanyl-D-alanine + UDP + H(+). It participates in cell wall biogenesis; peptidoglycan biosynthesis. Functionally, cell wall formation. Catalyzes the transfer of a GlcNAc subunit on undecaprenyl-pyrophosphoryl-MurNAc-pentapeptide (lipid intermediate I) to form undecaprenyl-pyrophosphoryl-MurNAc-(pentapeptide)GlcNAc (lipid intermediate II). This chain is UDP-N-acetylglucosamine--N-acetylmuramyl-(pentapeptide) pyrophosphoryl-undecaprenol N-acetylglucosamine transferase, found in Chlorobium phaeobacteroides (strain DSM 266 / SMG 266 / 2430).